A 173-amino-acid polypeptide reads, in one-letter code: T-complex protein 1 subunit alpha (173 aa).

The protein belongs to the TCP-1 chaperonin family. Component of the chaperonin-containing T-complex (TRiC), a heterooligomeric complex of about 850 to 900 kDa that forms two stacked rings, 12 to 16 nm in diameter.

The protein resides in the cytoplasm. It localises to the cytosol. Functionally, component of the chaperonin-containing T-complex (TRiC), a molecular chaperone complex that assists the folding of proteins upon ATP hydrolysis. The protein is T-complex protein 1 subunit alpha of Ambystoma mexicanum (Axolotl).